The following is a 483-amino-acid chain: GTPase Der (483 aa).

2 consecutive EngA-type G domains span residues 3–167 (FTLA…GEER) and 212–387 (LRIA…EIWN). Residues 9–16 (GRPNVGKS), 56–60 (DTAGL), 119–122 (NKAE), 218–225 (GRPNAGKS), 265–269 (DTAGM), and 330–333 (NKWD) contribute to the GTP site. The KH-like domain occupies 388-472 (RRISTGRLNR…PIRLSLRTSD (85 aa)).

This sequence belongs to the TRAFAC class TrmE-Era-EngA-EngB-Septin-like GTPase superfamily. EngA (Der) GTPase family. In terms of assembly, associates with the 50S ribosomal subunit.

In terms of biological role, GTPase that plays an essential role in the late steps of ribosome biogenesis. This Brucella ovis (strain ATCC 25840 / 63/290 / NCTC 10512) protein is GTPase Der.